A 186-amino-acid polypeptide reads, in one-letter code: Sec-independent protein translocase protein TatB (186 aa).

Residues 1–21 traverse the membrane as a helical segment; sequence MFDIGFSELILLMVLGLVVLG. A disordered region spans residues 120–186; that stretch reads NAEKSQNAIS…SKSQSSKTKS (67 aa). The span at 177-186 shows a compositional bias: polar residues; it reads SKSQSSKTKS.

Belongs to the TatB family. In terms of assembly, the Tat system comprises two distinct complexes: a TatABC complex, containing multiple copies of TatA, TatB and TatC subunits, and a separate TatA complex, containing only TatA subunits. Substrates initially bind to the TatABC complex, which probably triggers association of the separate TatA complex to form the active translocon.

The protein localises to the cell inner membrane. Part of the twin-arginine translocation (Tat) system that transports large folded proteins containing a characteristic twin-arginine motif in their signal peptide across membranes. Together with TatC, TatB is part of a receptor directly interacting with Tat signal peptides. TatB may form an oligomeric binding site that transiently accommodates folded Tat precursor proteins before their translocation. This Haemophilus influenzae (strain ATCC 51907 / DSM 11121 / KW20 / Rd) protein is Sec-independent protein translocase protein TatB.